The chain runs to 89 residues: Small ribosomal subunit protein uS15 (89 aa).

This sequence belongs to the universal ribosomal protein uS15 family. Part of the 30S ribosomal subunit. Forms a bridge to the 50S subunit in the 70S ribosome, contacting the 23S rRNA.

In terms of biological role, one of the primary rRNA binding proteins, it binds directly to 16S rRNA where it helps nucleate assembly of the platform of the 30S subunit by binding and bridging several RNA helices of the 16S rRNA. Functionally, forms an intersubunit bridge (bridge B4) with the 23S rRNA of the 50S subunit in the ribosome. This Nitratidesulfovibrio vulgaris (strain DP4) (Desulfovibrio vulgaris) protein is Small ribosomal subunit protein uS15.